Here is a 210-residue protein sequence, read N- to C-terminus: Coatomer subunit zeta-2 (210 aa).

A compositionally biased stretch (basic and acidic residues) spans 1–12 (MQRPEAWPRPHP). Residues 1-34 (MQRPEAWPRPHPGEGAAAAQAGGPAPPARAGEPS) are disordered. A compositionally biased stretch (low complexity) spans 13-34 (GEGAAAAQAGGPAPPARAGEPS).

Belongs to the adaptor complexes small subunit family. In terms of assembly, oligomeric complex.

The protein localises to the cytoplasm. It localises to the endoplasmic reticulum-Golgi intermediate compartment membrane. The protein resides in the golgi apparatus membrane. Its subcellular location is the cytoplasmic vesicle. It is found in the COPI-coated vesicle membrane. Functionally, the coatomer is a cytosolic protein complex that binds to dilysine motifs and reversibly associates with Golgi non-clathrin-coated vesicles, which further mediate biosynthetic protein transport from the ER, via the Golgi up to the trans Golgi network. Coatomer complex is required for budding from Golgi membranes, and is essential for the retrograde Golgi-to-ER transport of dilysine-tagged proteins. The zeta subunit may be involved in regulating the coat assembly and, hence, the rate of biosynthetic protein transport due to its association-dissociation properties with the coatomer complex. This Homo sapiens (Human) protein is Coatomer subunit zeta-2 (COPZ2).